A 107-amino-acid polypeptide reads, in one-letter code: Iron-binding protein IscA (107 aa).

Fe cation-binding residues include C35, C99, and C101.

This sequence belongs to the HesB/IscA family. As to quaternary structure, homodimer; may form tetramers and higher multimers. Fe cation is required as a cofactor.

In terms of biological role, is able to transfer iron-sulfur clusters to apo-ferredoxin. Multiple cycles of [2Fe2S] cluster formation and transfer are observed, suggesting that IscA acts catalytically. Recruits intracellular free iron so as to provide iron for the assembly of transient iron-sulfur cluster in IscU in the presence of IscS, L-cysteine and the thioredoxin reductase system TrxA/TrxB. In Salmonella agona (strain SL483), this protein is Iron-binding protein IscA.